The chain runs to 106 residues: uncharacterized protein (106 aa).

The segment covering 24–35 has biased composition (polar residues); the sequence is ANSISSTSFYHK. Disordered stretches follow at residues 24-49 and 65-87; these read ANSI…SCEE and LTAE…SSDE. Composition is skewed to low complexity over residues 36–46 and 74–85; these read SSNNNSHANAS and SLSASNQPASSS.

This is an uncharacterized protein from Arabidopsis thaliana (Mouse-ear cress).